The following is a 217-amino-acid chain: Protein LURP-one-related 2 (217 aa).

This sequence belongs to the LOR family.

Its function is as follows. Might be related to the phospholipid scramblase and tubby-like superfamily of membrane tethered transcription factors. This Arabidopsis thaliana (Mouse-ear cress) protein is Protein LURP-one-related 2.